The primary structure comprises 364 residues: DNA replication and repair protein RecF (364 aa).

30-37 lines the ATP pocket; the sequence is GNNAQGKT.

Belongs to the RecF family.

The protein localises to the cytoplasm. Functionally, the RecF protein is involved in DNA metabolism; it is required for DNA replication and normal SOS inducibility. RecF binds preferentially to single-stranded, linear DNA. It also seems to bind ATP. This is DNA replication and repair protein RecF from Clostridium botulinum (strain Okra / Type B1).